Reading from the N-terminus, the 394-residue chain is uncharacterized protein (394 aa).

N-linked (GlcNAc...) asparagine glycans are attached at residues asparagine 3, asparagine 14, asparagine 20, and asparagine 25. 6 consecutive transmembrane segments (helical) span residues 64 to 84, 101 to 121, 133 to 153, 180 to 200, 228 to 248, and 256 to 276; these read AVGI…LVNI, FIWI…YIDV, IFSF…WHVI, IFVV…MGFF, VLLA…SFVY, and WVGM…QFLE. Asparagine 283 and asparagine 286 each carry an N-linked (GlcNAc...) asparagine glycan. Residues 291–311 form a helical membrane-spanning segment; sequence AGLVFGLGFCPPLILAYTVCI. Asparagine 344 is a glycosylation site (N-linked (GlcNAc...) asparagine).

It is found in the membrane. This is an uncharacterized protein from Schizosaccharomyces pombe (strain 972 / ATCC 24843) (Fission yeast).